We begin with the raw amino-acid sequence, 287 residues long: Zinc transporter ZIP9 (287 aa).

The helical transmembrane segment at 4–24 threads the bilayer; that stretch reads FLSISLLSLAMLVGCYVAGII. Asn-29 carries N-linked (GlcNAc...) asparagine glycosylation. The next 5 helical transmembrane spans lie at 35-55, 107-127, 147-167, 177-197, and 211-231; these read LKLV…AVIV, AYIG…DQIG, ITTT…LGAA, LIVF…LVSF, and HLLV…LGLS. Asn-242 carries an N-linked (GlcNAc...) asparagine glycan. Residues 245 to 265 traverse the membrane as a helical segment; the sequence is GVAMLFSAGTFLYVATVHVLP. Residues 268–287 are disordered; sequence TSTNQSGSSLSPRPLPSGKN. Asn-271 carries an N-linked (GlcNAc...) asparagine glycan. The segment covering 273-287 has biased composition (low complexity); that stretch reads SGSSLSPRPLPSGKN.

Belongs to the ZIP transporter (TC 2.A.5) family.

The protein localises to the golgi apparatus. The protein resides in the trans-Golgi network membrane. It localises to the cell membrane. It is found in the cytoplasm. Its subcellular location is the perinuclear region. The protein localises to the mitochondrion. The protein resides in the nucleus. It carries out the reaction Zn(2+)(in) = Zn(2+)(out). In terms of biological role, transports zinc ions across cell and organelle membranes into the cytoplasm and regulates intracellular zinc homeostasis. Participates in the zinc ions efflux out of the secretory compartments. Regulates intracellular zinc level, resulting in the enhancement of AKT1 and MAPK3/MAPK1 (Erk1/2) phosphorylation in response to the BCR activation. Also functions as a membrane androgen receptor that mediates, through a G protein, the non-classical androgen signaling pathway, characterized by the activation of MAPK3/MAPK1 (Erk1/2) and transcription factors CREB1 or ATF1. This pathway contributes to CLDN1 and CLDN5 expression and tight junction formation between adjacent Sertoli cells. Mediates androgen-induced vascular endothelial cell proliferation through activation of an inhibitory G protein leading to the AKT1 and MAPK3/MAPK1 (Erk1/2) activation which in turn modulate inhibition (phosphorylation) of GSK3B and CCND1 transcription. Moreover, has dual functions as a membrane-bound androgen receptor and as an androgen-dependent zinc transporter both of which are mediated through an inhibitory G protein (Gi) that mediates both MAP kinase and zinc signaling leading to the androgen-dependent apoptotic process. This chain is Zinc transporter ZIP9, found in Rattus norvegicus (Rat).